The primary structure comprises 531 residues: Berberine bridge enzyme-like 9 (531 aa).

Residues 1–23 (MTSLTTQTLIITIFLLTIPTSFA) form the signal peptide. C35 and C99 are oxidised to a cystine. N76, N164, N271, N300, N314, N400, and N485 each carry an N-linked (GlcNAc...) asparagine glycan. The FAD-binding PCMH-type domain maps to 77 to 252 (MTRKPVAIVA…LAWKIKLVPV (176 aa)). The 6-(S-cysteinyl)-8alpha-(pros-histidyl)-FAD (His-Cys) cross-link spans 114-177 (HDYDGMSYLS…DLRGFPAGIC (64 aa)).

It belongs to the oxygen-dependent FAD-linked oxidoreductase family. It depends on FAD as a cofactor. The FAD cofactor is bound via a bicovalent 6-S-cysteinyl, 8alpha-N1-histidyl FAD linkage. As to expression, accumulates in cell walls of etiolated hypocotyls.

The protein localises to the secreted. It localises to the cell wall. This Arabidopsis thaliana (Mouse-ear cress) protein is Berberine bridge enzyme-like 9.